Reading from the N-terminus, the 144-residue chain is Transcription antitermination protein NusB (144 aa).

This sequence belongs to the NusB family.

Its function is as follows. Involved in transcription antitermination. Required for transcription of ribosomal RNA (rRNA) genes. Binds specifically to the boxA antiterminator sequence of the ribosomal RNA (rrn) operons. This chain is Transcription antitermination protein NusB, found in Histophilus somni (strain 2336) (Haemophilus somnus).